The primary structure comprises 326 residues: tRNA-modifying protein YgfZ (326 aa).

2 residues coordinate folate: Trp-27 and Trp-189.

This sequence belongs to the tRNA-modifying YgfZ family.

The protein resides in the cytoplasm. Its function is as follows. Folate-binding protein involved in regulating the level of ATP-DnaA and in the modification of some tRNAs. It is probably a key factor in regulatory networks that act via tRNA modification, such as initiation of chromosomal replication. The sequence is that of tRNA-modifying protein YgfZ from Salmonella arizonae (strain ATCC BAA-731 / CDC346-86 / RSK2980).